The following is a 145-amino-acid chain: Pleckstrin homology domain-containing protein 1 (145 aa).

A PH domain is found at 26 to 127 (NPERSGWLTK…WINSIGRSIV (102 aa)). Positions 29-53 (RSGWLTKQGDYIKTWRRRWFVLKRG) are binds specifically PtdIns3P.

In terms of assembly, binds PtdIns3P. Ubiquitously expressed.

The protein resides in the cytoplasm. Binds specifically to phosphatidylinositol 3-phosphate (PtdIns3P), but not to other phosphoinositides. The polypeptide is Pleckstrin homology domain-containing protein 1 (PH1) (Arabidopsis thaliana (Mouse-ear cress)).